Consider the following 494-residue polypeptide: SNF1-related protein kinase catalytic subunit alpha KIN12 (494 aa).

The Protein kinase domain occupies 19–270; that stretch reads YRIGKTLGHG…ITEIRQHPWF (252 aa). ATP-binding positions include 25 to 33 and Lys48; that span reads LGHGSFAKV. Asp142 (proton acceptor) is an active-site residue. Thr175 is subject to Phosphothreonine. Residues 289-386 are auto-inhibitory domain (AID); sequence AKKIEEEIIQ…GLKSNVKDDK (98 aa). The UBA domain maps to 291-331; sequence KIEEEIIQNVVNIGFDRNHVVDSLANRIQNEATVAYHLILD. Residues 293-494 are regulatory domain (RD); that stretch reads EEEIIQNVVN…VAFLRELGVL (202 aa). Residues 387–494 form a PPI region; the sequence is TWTLGLQSQG…VAFLRELGVL (108 aa). The region spanning 445–493 is the KA1 domain; sequence AIILPTVIKFEIQLYKVREGKYLLDILRIDGPQFIFFDLCVAFLRELGV.

It belongs to the protein kinase superfamily. CAMK Ser/Thr protein kinase family. SNF1 subfamily. In terms of assembly, subunit of a probable heterotrimeric complex consisting of an alpha catalytic subunit, and a beta (KINB) and a gamma (KING or SNF4) non-catalytic regulatory subunits. Post-translationally, autophosphorylated. Expressed at very low levels.

It carries out the reaction L-seryl-[protein] + ATP = O-phospho-L-seryl-[protein] + ADP + H(+). The catalysed reaction is L-threonyl-[protein] + ATP = O-phospho-L-threonyl-[protein] + ADP + H(+). Activated by phosphorylation at Thr-175. Catalytic subunit of the probable trimeric SNF1-related protein kinase (SnRK) complex, a central regulator of cellular energy homeostasis, which, in response to seemingly unrelated darkness, sugar and stress conditions, activates energy-producing pathways and inhibits energy-consuming processes. May also be involved in the regulation of fatty acid synthesis by phosphorylation of acetyl-CoA carboxylase and in assimilation of nitrogen by phosphorylating nitrate reductase. This Arabidopsis thaliana (Mouse-ear cress) protein is SNF1-related protein kinase catalytic subunit alpha KIN12.